The sequence spans 81 residues: Short neurotoxin 1 (81 aa).

Positions 1–21 (MKTLLLTLVVVTIVCLDLGYT) are cleaved as a signal peptide. 4 disulfides stabilise this stretch: cysteine 24–cysteine 43, cysteine 38–cysteine 60, cysteine 62–cysteine 73, and cysteine 74–cysteine 79.

The protein belongs to the three-finger toxin family. Short-chain subfamily. Type I alpha-neurotoxin sub-subfamily. In terms of tissue distribution, expressed by the venom gland.

The protein resides in the secreted. Its function is as follows. Binds to muscle nicotinic acetylcholine receptor (nAChR) and inhibit acetylcholine from binding to the receptor, thereby impairing neuromuscular transmission. The chain is Short neurotoxin 1 from Cryptophis nigrescens (Eastern small-eyed snake).